Consider the following 200-residue polypeptide: ATP-dependent Clp protease proteolytic subunit (200 aa).

Catalysis depends on serine 103, which acts as the Nucleophile. Histidine 128 is a catalytic residue.

This sequence belongs to the peptidase S14 family. As to quaternary structure, fourteen ClpP subunits assemble into 2 heptameric rings which stack back to back to give a disk-like structure with a central cavity, resembling the structure of eukaryotic proteasomes.

Its subcellular location is the cytoplasm. The enzyme catalyses Hydrolysis of proteins to small peptides in the presence of ATP and magnesium. alpha-casein is the usual test substrate. In the absence of ATP, only oligopeptides shorter than five residues are hydrolyzed (such as succinyl-Leu-Tyr-|-NHMec, and Leu-Tyr-Leu-|-Tyr-Trp, in which cleavage of the -Tyr-|-Leu- and -Tyr-|-Trp bonds also occurs).. In terms of biological role, cleaves peptides in various proteins in a process that requires ATP hydrolysis. Has a chymotrypsin-like activity. Plays a major role in the degradation of misfolded proteins. The chain is ATP-dependent Clp protease proteolytic subunit from Vibrio parahaemolyticus serotype O3:K6 (strain RIMD 2210633).